The chain runs to 490 residues: Muscarinic acetylcholine receptor M4 (490 aa).

Residues 1-42 (MHNLSAQPWQAKMANLTYDNVTLSNRSEVAIQPPTNYKTVEL) are Extracellular-facing. Residues Asn3, Asn15, Asn20, and Asn25 are each glycosylated (N-linked (GlcNAc...) asparagine). The chain crosses the membrane as a helical span at residues 43–64 (VFIATVTGSLSLVTVVGNILVM). Residues 65 to 78 (LSIKVNRQLQTVNN) lie on the Cytoplasmic side of the membrane. A helical transmembrane segment spans residues 79–99 (YFLFSLACADLIIGVFSMNLY). Over 100–116 (TVYIIKGYWPLGAVVCD) the chain is Extracellular. Residues Cys115 and Cys195 are joined by a disulfide bond. Residues 117–138 (LWLALDYVVSNASVMNLLIISF) form a helical membrane-spanning segment. The Cytoplasmic segment spans residues 139 to 158 (DRYFCVTKPLTYPARRTTKM). The chain crosses the membrane as a helical span at residues 159–181 (AGLMIAAAWILSFILWAPAILFW). Over 182–203 (QFIVGKRTVHERECYIQFLSNP) the chain is Extracellular. Residues 204-226 (AVTFGTAIAAFYLPVVIMTVLYI) form a helical membrane-spanning segment. Residues 227–412 (HISLASRSRV…AAREKKVTRT (186 aa)) lie on the Cytoplasmic side of the membrane. Residues 236–250 (VRRHKPESRKERKGK) show a composition bias toward basic residues. The interval 236–343 (VRRHKPESRK…HPRVNPTSKW (108 aa)) is disordered. Positions 270 to 285 (RAVEVKEEVRNGKVDD) are enriched in basic and acidic residues. Polar residues-rich tracts occupy residues 287 to 296 (PSAQTEATGQ) and 304 to 314 (NESSTVSMTQT). A helical membrane pass occupies residues 413 to 433 (IFAILLAFILTWTPYNVMVLI). At 434 to 447 (NTFCETCVPETVWS) the chain is on the extracellular side. A helical transmembrane segment spans residues 448–467 (IGYWLCYVNSTINPACYALC). At 468-490 (NATFKKTFKHLLMCQYRNIGTAR) the chain is on the cytoplasmic side.

The protein belongs to the G-protein coupled receptor 1 family. Muscarinic acetylcholine receptor subfamily. CHRM4 sub-subfamily. As to expression, expressed in heart and brain.

The protein resides in the cell membrane. Its subcellular location is the postsynaptic cell membrane. In terms of biological role, the muscarinic acetylcholine receptor mediates various cellular responses, including inhibition of adenylate cyclase, breakdown of phosphoinositides and modulation of potassium channels through the action of G proteins. Primary transducing effect is inhibition of adenylate cyclase. May couple to multiple functional responses in cell lines. This chain is Muscarinic acetylcholine receptor M4 (CHRM4), found in Gallus gallus (Chicken).